We begin with the raw amino-acid sequence, 120 residues long: Seripauperin-20 (120 aa).

A helical membrane pass occupies residues I7–A25.

It belongs to the SRP1/TIP1 family. Seripauperin subfamily.

It is found in the membrane. The polypeptide is Seripauperin-20 (PAU20) (Saccharomyces cerevisiae (strain ATCC 204508 / S288c) (Baker's yeast)).